Here is a 316-residue protein sequence, read N- to C-terminus: Acetyl-coenzyme A carboxylase carboxyl transferase subunit alpha (316 aa).

The region spanning 24–291 (NIKDKADIVD…KEALIQQLNE (268 aa)) is the CoA carboxyltransferase C-terminal domain.

It belongs to the AccA family. As to quaternary structure, acetyl-CoA carboxylase is a heterohexamer composed of biotin carboxyl carrier protein (AccB), biotin carboxylase (AccC) and two subunits each of ACCase subunit alpha (AccA) and ACCase subunit beta (AccD).

The protein resides in the cytoplasm. It carries out the reaction N(6)-carboxybiotinyl-L-lysyl-[protein] + acetyl-CoA = N(6)-biotinyl-L-lysyl-[protein] + malonyl-CoA. Its pathway is lipid metabolism; malonyl-CoA biosynthesis; malonyl-CoA from acetyl-CoA: step 1/1. In terms of biological role, component of the acetyl coenzyme A carboxylase (ACC) complex. First, biotin carboxylase catalyzes the carboxylation of biotin on its carrier protein (BCCP) and then the CO(2) group is transferred by the carboxyltransferase to acetyl-CoA to form malonyl-CoA. This Ruthia magnifica subsp. Calyptogena magnifica protein is Acetyl-coenzyme A carboxylase carboxyl transferase subunit alpha.